Consider the following 517-residue polypeptide: Crotonobetaine/carnitine--CoA ligase (517 aa).

This sequence belongs to the ATP-dependent AMP-binding enzyme family.

It catalyses the reaction 4-(trimethylamino)butanoate + ATP + CoA = 4-(trimethylamino)butanoyl-CoA + AMP + diphosphate. It carries out the reaction crotonobetaine + ATP + CoA = crotonobetainyl-CoA + AMP + diphosphate. The enzyme catalyses (R)-carnitine + ATP + CoA = (R)-carnitinyl-CoA + AMP + diphosphate. It functions in the pathway amine and polyamine metabolism; carnitine metabolism. Its function is as follows. Catalyzes the transfer of CoA to carnitine, generating the initial carnitinyl-CoA needed for the CaiB reaction cycle. Also has activity toward crotonobetaine and gamma-butyrobetaine. The protein is Crotonobetaine/carnitine--CoA ligase of Escherichia coli O157:H7.